The following is a 196-amino-acid chain: Rho-related protein racA (196 aa).

Positions 13, 15, 16, 17, 18, 32, 35, 60, 116, 118, and 159 each coordinate GTP. T17 contacts Mg(2+). 2 consecutive short sequence motifs (switch) follow at residues 26–37 (NAFPNEYIPTVF) and 57–75 (DTAGQEDYDRLRPLSYPQT). Residue T35 participates in Mg(2+) binding. C193 carries the post-translational modification Cysteine methyl ester. C193 carries S-geranylgeranyl cysteine lipidation. Residues 194 to 196 (LLF) constitute a propeptide, removed in mature form.

The protein belongs to the small GTPase superfamily. Rho family. As to quaternary structure, interacts (GTP-bound form) with PAK2 (via CRIB domain). Mg(2+) serves as cofactor.

It is found in the cell membrane. It localises to the cytoplasm. The protein localises to the cytoskeleton. It catalyses the reaction GTP + H2O = GDP + phosphate + H(+). Its activity is regulated as follows. Regulated by guanine nucleotide exchange factors (GEFs) which promote the exchange of bound GDP for free GTP, GTPase activating proteins (GAPs) which increase the GTP hydrolysis activity, and GDP dissociation inhibitors which inhibit the dissociation of the nucleotide from the GTPase. Its function is as follows. Small GTPase which cycles between active GTP-bound and inactive GDP-bound states. Involved in cytoskeleton remodeling. Plays a role in phagocytosis of bacteria and host erythrocytes. Involved in capping of surface receptors. May be involved in cytokinesis. The polypeptide is Rho-related protein racA (Entamoeba histolytica (strain ATCC 30459 / HM-1:IMSS / ABRM)).